Reading from the N-terminus, the 88-residue chain is Acylphosphatase (88 aa).

The Acylphosphatase-like domain maps to 3–88; it reads AVDVLISGRV…RAGHQGFEVR (86 aa). Catalysis depends on residues arginine 18 and asparagine 36.

This sequence belongs to the acylphosphatase family.

The catalysed reaction is an acyl phosphate + H2O = a carboxylate + phosphate + H(+). The protein is Acylphosphatase (acyP) of Methanocella arvoryzae (strain DSM 22066 / NBRC 105507 / MRE50).